A 908-amino-acid polypeptide reads, in one-letter code: NADH-quinone oxidoreductase subunit G (908 aa).

One can recognise a 2Fe-2S ferredoxin-type domain in the interval alanine 2 to glutamate 83. The [2Fe-2S] cluster site is built by cysteine 34, cysteine 45, cysteine 48, and cysteine 67. Positions glutamate 83 to glycine 122 constitute a 4Fe-4S His(Cys)3-ligated-type domain. Histidine 99, cysteine 103, cysteine 106, cysteine 112, cysteine 151, cysteine 154, cysteine 157, cysteine 201, cysteine 228, cysteine 231, cysteine 235, and cysteine 263 together coordinate [4Fe-4S] cluster. In terms of domain architecture, 4Fe-4S Mo/W bis-MGD-type spans methionine 221 to aspartate 277.

Belongs to the complex I 75 kDa subunit family. As to quaternary structure, composed of 13 different subunits. Subunits NuoCD, E, F, and G constitute the peripheral sector of the complex. [2Fe-2S] cluster is required as a cofactor. The cofactor is [4Fe-4S] cluster.

It localises to the cytoplasm. It is found in the cell inner membrane. The catalysed reaction is a quinone + NADH + 5 H(+)(in) = a quinol + NAD(+) + 4 H(+)(out). Its function is as follows. NDH-1 shuttles electrons from NADH, via FMN and iron-sulfur (Fe-S) centers, to quinones in the respiratory chain. The immediate electron acceptor for the enzyme in this species is believed to be ubiquinone. Couples the redox reaction to proton translocation (for every two electrons transferred, four hydrogen ions are translocated across the cytoplasmic membrane), and thus conserves the redox energy in a proton gradient. The sequence is that of NADH-quinone oxidoreductase subunit G (nuoG) from Escherichia coli (strain K12).